We begin with the raw amino-acid sequence, 150 residues long: Transcription antitermination protein NusB (150 aa).

It belongs to the NusB family.

In terms of biological role, involved in transcription antitermination. Required for transcription of ribosomal RNA (rRNA) genes. Binds specifically to the boxA antiterminator sequence of the ribosomal RNA (rrn) operons. The chain is Transcription antitermination protein NusB from Streptococcus pyogenes serotype M1.